Here is a 1630-residue protein sequence, read N- to C-terminus: Patronin (1630 aa).

The region spanning 156–288 (QSYEQALLGW…LVVLLTDLFN (133 aa)) is the Calponin-homology (CH) domain. Disordered stretches follow at residues 311–333 (NSFGGGLNRRSTPPNEYQTVQSN) and 355–446 (ASMH…DQLN). Residues 319 to 333 (RRSTPPNEYQTVQSN) show a composition bias toward polar residues. The residue at position 322 (Thr-322) is a Phosphothreonine. The span at 358 to 394 (HSQQQQQLHQQQQHQQQYHQQPLQQHPSQSQLQIQQQ) shows a compositional bias: low complexity. The span at 404–419 (QAKEKTNVESKADERG) shows a compositional bias: basic and acidic residues. Ser-422, Ser-431, Ser-441, Ser-460, Ser-463, and Ser-466 each carry phosphoserine. Over residues 432-446 (QLTIENFGGSQDQLN) the composition is skewed to polar residues. A disordered region spans residues 486–589 (LQLGYDTDSG…SMPASPAAWQ (104 aa)). Thr-492 is modified (phosphothreonine). Phosphoserine occurs at positions 494, 496, 513, and 530. The segment covering 495-507 (GSEKQDRETEKYS) has biased composition (basic and acidic residues). Over residues 513–529 (SVDNVPTVSSHNLSNAG) the composition is skewed to polar residues. Low complexity predominate over residues 576 to 587 (SSTSSMPASPAA). A coiled-coil region spans residues 601 to 639 (ENASKLSTIRMKLEEKRRRIEQDKRKIEMALLRHQEKED). Disordered stretches follow at residues 726–753 (VSAYSSRPPSRDPYQQQLHHQQQQPMPM), 872–967 (QQHQ…GMPM), 1005–1042 (DFVHQQQQQHQHQQQLQQQQRLQGHSGRGSSSEDYDSG), 1055–1186 (NLTY…NKYT), 1200–1241 (GAMS…NAEA), 1284–1315 (EAKARKEIEASQKREKEREKEEERARKKEEQM), and 1335–1459 (EREG…GVER). 2 stretches are compositionally biased toward low complexity: residues 738-750 (PYQQQLHHQQQQP) and 872-896 (QQHQKQKQTWMNRPPSSAGAPSPGS). Over residues 902–914 (NGGGGGGGGGGGE) the composition is skewed to gly residues. The segment covering 919–947 (FQVQASPQHGQRQVSGSNGVQRQQSLTNL) has biased composition (polar residues). Composition is skewed to low complexity over residues 956–967 (PQNMGMPMGMPM) and 1008–1036 (HQQQQQHQHQQQLQQQQRLQGHSGRGSSS). Residues Ser-1034, Ser-1035, Ser-1036, and Ser-1067 each carry the phosphoserine modification. Residues 1065–1074 (RPSIQANSFQ) are compositionally biased toward polar residues. The span at 1105–1116 (RPKPPLRAKRSP) shows a compositional bias: basic residues. The span at 1167–1184 (GLNNSNSVKSPGNATYNK) shows a compositional bias: polar residues. Low complexity predominate over residues 1218 to 1230 (QSPQQTQQPMSPT). Residues Ser-1219 and Ser-1228 each carry the phosphoserine modification. Positions 1277-1343 (QRRQQQEEAK…AEREGKTLDR (67 aa)) form a coiled coil. The span at 1335-1348 (EREGKTLDRPDLHV) shows a compositional bias: basic and acidic residues. Over residues 1363–1374 (RQQRTTRPRPKT) the composition is skewed to basic residues. Low complexity predominate over residues 1382 to 1400 (VDISEASSISSRGKKGSSS). Ser-1398, Ser-1399, and Ser-1400 each carry phosphoserine. Positions 1401–1412 (NLTGYGQLSSNS) are enriched in polar residues. Positions 1450-1459 (TSREPAGVER) are enriched in basic and acidic residues. The CKK domain occupies 1489–1623 (GPKLYKQPAA…QGKRVQLPSK (135 aa)).

This sequence belongs to the CAMSAP1 family. In terms of assembly, interacts with msps. Associates with the minus end of the microtubules.

It localises to the cytoplasm. Its subcellular location is the cytoskeleton. The protein resides in the microtubule organizing center. It is found in the spindle pole body. The protein localises to the centrosome. It localises to the perinuclear region. In terms of biological role, key microtubule-organizing protein that specifically binds the minus-end of microtubules and regulates their dynamics and organization. Involved in mitotic spindle assembly. Regulates microtubule (MT) severing. Antagonizes the activity of the kinesin-13 depolymerase Klp10A thereby switching off the depolymerization of the MTs at their pole-associated minus ends, which turns off poleward flux and induces anaphase B spindle elongation. Involved in asymmetric cell division of sensory organ precursor (SOP) cells by playing a role in the asymmetric localization of Sara-expressing endosomes to the pIIa daughter cell but not to the pIIb cell. Klp98A targets Sara-expressing endosomes to the central spindle which is symmetrically arranged in early cell division. During late cytokinesis, central spindle asymmetry is generated by enrichment of Patronin on the pIIb side which protects microtubules from depolymerization by Klp10A while unprotected microtubules on the pIIa side are disassembled by Klp10A, leading to the asymmetric delivery of Sara-expressing endosomes to the pIIa daughter cell. In fat body cells, part of perinuclear non-centrosomal microtubule-organizing centers (ncMTOCs) which function to accommodate the organization of microtubule (MT) networks to control nuclear positioning and dynein motor-based retrograde endosomal trafficking. Within the ncMTOC, Msp300 and shot anchors the ncMTOC at the nuclear surface and recruits the MT minus-end regulators Patronin and Nin for assembly, anchoring and/or stabilization of circumferential and radial MTs at the ncMTOCs. This protein, and perhaps Nin, recruits msps to the ncMTOC for the gamma-tubulin-independent elongation of radial MTs. The protein is Patronin (Patronin) of Drosophila melanogaster (Fruit fly).